Reading from the N-terminus, the 482-residue chain is Cysteine--tRNA ligase (482 aa).

Cys29 contributes to the Zn(2+) binding site. Positions Pro31 to His41 match the 'HIGH' region motif. Residues Cys210, His235, and Glu239 each contribute to the Zn(2+) site. The 'KMSKS' region signature appears at Lys272–Ser276. Residue Lys275 participates in ATP binding.

Belongs to the class-I aminoacyl-tRNA synthetase family. As to quaternary structure, monomer. Zn(2+) serves as cofactor.

The protein localises to the cytoplasm. It carries out the reaction tRNA(Cys) + L-cysteine + ATP = L-cysteinyl-tRNA(Cys) + AMP + diphosphate. The sequence is that of Cysteine--tRNA ligase from Anaeromyxobacter sp. (strain Fw109-5).